The following is a 59-amino-acid chain: Small ribosomal subunit protein bS21 (59 aa).

Over residues 32-42 (VRKREHYDKPS) the composition is skewed to basic and acidic residues. The segment at 32-59 (VRKREHYDKPSVKRKKKAEAARRKNAKK) is disordered. The segment covering 43 to 59 (VKRKKKAEAARRKNAKK) has biased composition (basic residues).

The protein belongs to the bacterial ribosomal protein bS21 family.

The polypeptide is Small ribosomal subunit protein bS21 (Clostridioides difficile (strain 630) (Peptoclostridium difficile)).